A 305-amino-acid chain; its full sequence is Homoserine O-acetyltransferase (305 aa).

Cys132 (acyl-thioester intermediate) is an active-site residue. Substrate is bound by residues Lys153 and Ser181. His221 serves as the catalytic Proton acceptor. Residue Glu223 is part of the active site. Arg235 lines the substrate pocket.

It belongs to the MetA family.

It is found in the cytoplasm. It catalyses the reaction L-homoserine + acetyl-CoA = O-acetyl-L-homoserine + CoA. The protein operates within amino-acid biosynthesis; L-methionine biosynthesis via de novo pathway; O-acetyl-L-homoserine from L-homoserine: step 1/1. Transfers an acetyl group from acetyl-CoA to L-homoserine, forming acetyl-L-homoserine. In Leuconostoc mesenteroides subsp. mesenteroides (strain ATCC 8293 / DSM 20343 / BCRC 11652 / CCM 1803 / JCM 6124 / NCDO 523 / NBRC 100496 / NCIMB 8023 / NCTC 12954 / NRRL B-1118 / 37Y), this protein is Homoserine O-acetyltransferase.